A 334-amino-acid polypeptide reads, in one-letter code: tRNA N6-adenosine threonylcarbamoyltransferase (334 aa).

Fe cation is bound by residues H110 and H114. Substrate contacts are provided by residues I133 to G137, D166, G179, D183, and N275. Position 303 (D303) interacts with Fe cation.

Belongs to the KAE1 / TsaD family. Fe(2+) is required as a cofactor.

It is found in the cytoplasm. The enzyme catalyses L-threonylcarbamoyladenylate + adenosine(37) in tRNA = N(6)-L-threonylcarbamoyladenosine(37) in tRNA + AMP + H(+). Its function is as follows. Required for the formation of a threonylcarbamoyl group on adenosine at position 37 (t(6)A37) in tRNAs that read codons beginning with adenine. Is involved in the transfer of the threonylcarbamoyl moiety of threonylcarbamoyl-AMP (TC-AMP) to the N6 group of A37, together with TsaE and TsaB. TsaD likely plays a direct catalytic role in this reaction. This is tRNA N6-adenosine threonylcarbamoyltransferase from Salinibacter ruber (strain DSM 13855 / M31).